Reading from the N-terminus, the 171-residue chain is Shikimate kinase (171 aa).

14 to 19 (GAGKST) serves as a coordination point for ATP. S18 is a Mg(2+) binding site. Substrate contacts are provided by D36, R60, and G82. An ATP-binding site is contributed by R120. R139 contacts substrate. Q156 is a binding site for ATP.

It belongs to the shikimate kinase family. In terms of assembly, monomer. It depends on Mg(2+) as a cofactor.

It is found in the cytoplasm. The catalysed reaction is shikimate + ATP = 3-phosphoshikimate + ADP + H(+). It functions in the pathway metabolic intermediate biosynthesis; chorismate biosynthesis; chorismate from D-erythrose 4-phosphate and phosphoenolpyruvate: step 5/7. Functionally, catalyzes the specific phosphorylation of the 3-hydroxyl group of shikimic acid using ATP as a cosubstrate. This Shewanella frigidimarina (strain NCIMB 400) protein is Shikimate kinase.